A 201-amino-acid polypeptide reads, in one-letter code: FMN-dependent NADH:quinone oxidoreductase (201 aa).

FMN is bound by residues S10, 16–18 (SQS), 96–99 (MYNF), and 140–143 (SRGG).

The protein belongs to the azoreductase type 1 family. Homodimer. It depends on FMN as a cofactor.

It carries out the reaction 2 a quinone + NADH + H(+) = 2 a 1,4-benzosemiquinone + NAD(+). The enzyme catalyses N,N-dimethyl-1,4-phenylenediamine + anthranilate + 2 NAD(+) = 2-(4-dimethylaminophenyl)diazenylbenzoate + 2 NADH + 2 H(+). Quinone reductase that provides resistance to thiol-specific stress caused by electrophilic quinones. In terms of biological role, also exhibits azoreductase activity. Catalyzes the reductive cleavage of the azo bond in aromatic azo compounds to the corresponding amines. The chain is FMN-dependent NADH:quinone oxidoreductase from Pectobacterium atrosepticum (strain SCRI 1043 / ATCC BAA-672) (Erwinia carotovora subsp. atroseptica).